Here is a 319-residue protein sequence, read N- to C-terminus: Olfactory receptor 5B21 (319 aa).

Topologically, residues 1 to 26 (MTSMENITEVTEFILLGLTDDPNLQV) are extracellular. Asn6 carries N-linked (GlcNAc...) asparagine glycosylation. Residues 27 to 47 (PLLLIFLFIYLVTLIGNGGMM) form a helical membrane-spanning segment. Over 48–55 (VIIFSDSH) the chain is Cytoplasmic. The helical transmembrane segment at 56-76 (LHTPMYFFLSNLSFVDLGYSS) threads the bilayer. Topologically, residues 77–100 (AVAPKMVAALQSGNKVISYNGCAA) are extracellular. A disulfide bridge connects residues Cys98 and Cys190. A helical membrane pass occupies residues 101–121 (QFFFFVGFATVECYLLASMAY). Residues 122-134 (DRHAAVCRPLHYT) lie on the Cytoplasmic side of the membrane. A helical membrane pass occupies residues 135 to 155 (TTMTTGVCTILTIGSYTCGFL). The Extracellular portion of the chain corresponds to 156-197 (NASIHAADTFKLSFCGSNKINHFFCDIPPLLALACSSTHISK). The helical transmembrane segment at 198 to 218 (LVVFFVVGFNVFFTLLVIIIS) threads the bilayer. Over 219 to 238 (YFFIYIAIQNMKSSEGRKKA) the chain is Cytoplasmic. Residues 239 to 259 (FSTCASHLTAVSIFYGTIIFM) traverse the membrane as a helical segment. Residues 260–272 (YLQPSSGQSMDTD) are Extracellular-facing. A helical membrane pass occupies residues 273-293 (KIASVFYTVVIPMLNPLIYSL). Residues 294-319 (RNREVKSALWKILNRFYPASFSVSRK) are Cytoplasmic-facing.

Belongs to the G-protein coupled receptor 1 family.

It localises to the cell membrane. Its function is as follows. Odorant receptor. The chain is Olfactory receptor 5B21 from Mus musculus (Mouse).